Here is a 180-residue protein sequence, read N- to C-terminus: tRNA (cytidine(56)-2'-O)-methyltransferase (180 aa).

S-adenosyl-L-methionine is bound by residues leucine 85, 114 to 118 (GAEKV), and 132 to 139 (VGNQPHSE).

Belongs to the aTrm56 family. In terms of assembly, homodimer.

The protein localises to the cytoplasm. It catalyses the reaction cytidine(56) in tRNA + S-adenosyl-L-methionine = 2'-O-methylcytidine(56) in tRNA + S-adenosyl-L-homocysteine + H(+). Functionally, specifically catalyzes the AdoMet-dependent 2'-O-ribose methylation of cytidine at position 56 in tRNAs. The protein is tRNA (cytidine(56)-2'-O)-methyltransferase of Thermococcus kodakarensis (strain ATCC BAA-918 / JCM 12380 / KOD1) (Pyrococcus kodakaraensis (strain KOD1)).